Reading from the N-terminus, the 204-residue chain is Tumor protein D53 (204 aa).

The tract at residues 1 to 31 (MEAQAQGLLETEPLQGRDGDAVGSADFSSML) is disordered. Positions 22–73 (VGSADFSSMLSEEEKEELKAELIQLEDEITTLRQVLSAKERHLVEIKQKLGM) form a coiled coil. 4 positions are modified to phosphoserine: Ser-29, Ser-86, Ser-122, and Ser-131. Arg-133 carries the post-translational modification Omega-N-methylarginine. Thr-146 bears the Phosphothreonine mark. 2 positions are modified to phosphoserine: Ser-149 and Ser-174. Positions 164–204 (KVGGTNHGGGSFEEVLNSTAHASSQNASAGSRQTKDEELQC) are disordered. Residues 179–195 (LNSTAHASSQNASAGSR) are compositionally biased toward polar residues.

Belongs to the TPD52 family. Forms a homodimer or heterodimer with other members of the family.

This chain is Tumor protein D53 (Tpd52l1), found in Mus musculus (Mouse).